The chain runs to 408 residues: Type II methyltransferase M.VspI (408 aa).

The protein belongs to the N(4)/N(6)-methyltransferase family.

The catalysed reaction is a 2'-deoxyadenosine in DNA + S-adenosyl-L-methionine = an N(6)-methyl-2'-deoxyadenosine in DNA + S-adenosyl-L-homocysteine + H(+). Its function is as follows. A gamma subtype methylase, recognizes the double-stranded sequence 5'-ATTAAT-3', methylates A-5 on both strands, and protects the DNA from cleavage by the VspI endonuclease. In Vibrio sp. (strain 343), this protein is Type II methyltransferase M.VspI.